We begin with the raw amino-acid sequence, 148 residues long: 3-dehydroquinate dehydratase (148 aa).

The active-site Proton acceptor is tyrosine 24. Residues asparagine 75, histidine 81, and aspartate 88 each coordinate substrate. Histidine 101 serves as the catalytic Proton donor. Substrate contacts are provided by residues 102–103 and arginine 112; that span reads LS.

The protein belongs to the type-II 3-dehydroquinase family. Homododecamer.

It catalyses the reaction 3-dehydroquinate = 3-dehydroshikimate + H2O. It participates in metabolic intermediate biosynthesis; chorismate biosynthesis; chorismate from D-erythrose 4-phosphate and phosphoenolpyruvate: step 3/7. Catalyzes a trans-dehydration via an enolate intermediate. The polypeptide is 3-dehydroquinate dehydratase (Rhizobium meliloti (strain 1021) (Ensifer meliloti)).